Here is a 405-residue protein sequence, read N- to C-terminus: Tryptophan synthase beta chain (405 aa).

Lys95 carries the N6-(pyridoxal phosphate)lysine modification.

It belongs to the TrpB family. In terms of assembly, tetramer of two alpha and two beta chains. Pyridoxal 5'-phosphate is required as a cofactor.

The enzyme catalyses (1S,2R)-1-C-(indol-3-yl)glycerol 3-phosphate + L-serine = D-glyceraldehyde 3-phosphate + L-tryptophan + H2O. It participates in amino-acid biosynthesis; L-tryptophan biosynthesis; L-tryptophan from chorismate: step 5/5. Its function is as follows. The beta subunit is responsible for the synthesis of L-tryptophan from indole and L-serine. The sequence is that of Tryptophan synthase beta chain (trpB) from Pseudomonas putida (Arthrobacter siderocapsulatus).